Here is a 593-residue protein sequence, read N- to C-terminus: 3-hydroxy-3-methylglutaryl-coenzyme A reductase (593 aa).

The interval 1–36 (MDVRRRSINSIHQIPSVGGTAPPMLKPKQPTKVDAV) is disordered. A run of 2 helical transmembrane segments spans residues 52 to 72 (LYIT…YLLV) and 94 to 114 (AIFT…IGLV). Positions 115–177 (QPFTSRSSHD…PVPISPPSSE (63 aa)) are linker. Positions 178–593 (EDEEIIKSVV…SNKDVTKASS (416 aa)) are catalytic. E272 (charge relay system) is an active-site residue. The N-linked (GlcNAc...) asparagine glycan is linked to N336. The Charge relay system role is filled by K404. N-linked (GlcNAc...) asparagine glycosylation occurs at N449. Residue D480 is the Charge relay system of the active site. The active-site Proton donor is H578. A glycan (N-linked (GlcNAc...) asparagine) is linked at N582.

The protein belongs to the HMG-CoA reductase family.

It is found in the endoplasmic reticulum membrane. It carries out the reaction (R)-mevalonate + 2 NADP(+) + CoA = (3S)-3-hydroxy-3-methylglutaryl-CoA + 2 NADPH + 2 H(+). It functions in the pathway metabolic intermediate biosynthesis; (R)-mevalonate biosynthesis; (R)-mevalonate from acetyl-CoA: step 3/3. Catalyzes the synthesis of mevalonate. The specific precursor of all isoprenoid compounds present in plants. The chain is 3-hydroxy-3-methylglutaryl-coenzyme A reductase from Camptotheca acuminata (Happy tree).